A 292-amino-acid polypeptide reads, in one-letter code: MATLKELKQKISSVKNTQKTTRAMKLVSTAKLKRAEEAIMRSREYARKIDEVMHEISAKLASVKDSIELRAFAKIENVEKVDVIVITADKGLCGGFNIQTIKQTIKLIEELKEKKVKIRLKVIGKKAIEYFKFVGIDMYEEVIGLSAAPNYEKAAELIQKSYEDFVNEEIDNIITIHNGYVNKLTQQVYVKELLPIEVDVNDSQEFLEVEPDNDYETILETLVKKYIEYSLYYALLDSLAAEHSARMQAMDAATNNAKEMVHQLTLEFNKARQEAVTRELIEIVTAIEAMKK.

It belongs to the ATPase gamma chain family. F-type ATPases have 2 components, CF(1) - the catalytic core - and CF(0) - the membrane proton channel. CF(1) has five subunits: alpha(3), beta(3), gamma(1), delta(1), epsilon(1). CF(0) has three main subunits: a, b and c.

The protein localises to the cell inner membrane. In terms of biological role, produces ATP from ADP in the presence of a proton gradient across the membrane. The gamma chain is believed to be important in regulating ATPase activity and the flow of protons through the CF(0) complex. The sequence is that of ATP synthase gamma chain from Nautilia profundicola (strain ATCC BAA-1463 / DSM 18972 / AmH).